We begin with the raw amino-acid sequence, 132 residues long: Intraflagellar transport protein 20 homolog B (132 aa).

A coiled-coil region spans residues 87–112 (EAQQQQLYALIAEKKMQLERYRIEYD).

It is found in the golgi apparatus. The protein resides in the cis-Golgi network. The protein localises to the cytoplasm. It localises to the cytoskeleton. Its subcellular location is the microtubule organizing center. It is found in the centrosome. The protein resides in the centriole. The protein localises to the cell projection. It localises to the cilium. Its function is as follows. Involved in ciliary process assembly. May play a role in the trafficking of ciliary membrane proteins from the Golgi complex to the cilium. Regulates the platelet-derived growth factor receptor-alpha (PDGFRA) signaling pathway. Plays an important role in spermatogenesis, particularly spermiogenesis, when germ cells form flagella. This is Intraflagellar transport protein 20 homolog B (ift20-b) from Xenopus laevis (African clawed frog).